A 1112-amino-acid polypeptide reads, in one-letter code: Plasma membrane calcium-transporting ATPase 2 (1112 aa).

At 1 to 94 (MGDMSNSDFY…NLIPPKKPKT (94 aa)) the chain is on the cytoplasmic side. The chain crosses the membrane as a helical span at residues 95–115 (FLQLVWEALQDVTLIILEIAA). Topologically, residues 116–152 (LISLGLSFYHPPGETGGESCGAAAGGVEDEGEADAGW) are extracellular. A helical membrane pass occupies residues 153–173 (IEGAAILLSVVCVVLVTAFND). The Cytoplasmic portion of the chain corresponds to 174-373 (WSKEKQFRGL…KEKSVLQGKL (200 aa)). Residues 298–311 (EKKEKKGGAVEDGH) show a composition bias toward basic and acidic residues. The segment at 298–363 (EKKEKKGGAV…KERKKVSAPK (66 aa)) is disordered. Residues 312–327 (QNTGKMQDGNMESNQI) show a composition bias toward polar residues. Residues 351–363 (ADEKERKKVSAPK) show a composition bias toward basic and acidic residues. The chain crosses the membrane as a helical span at residues 374 to 393 (TKLAVQIGKAGLLMSAITVI). At 394–426 (ILVLYFAIDNFVMQKRPWMPECTPIYIQYFVKF) the chain is on the extracellular side. A helical membrane pass occupies residues 427 to 444 (FIIGVTVLVVAVPEGLPL). At 445-858 (AVTISLAYSV…MWGRNVYDSI (414 aa)) the chain is on the cytoplasmic side. Asp-482 functions as the 4-aspartylphosphate intermediate in the catalytic mechanism. Mg(2+) contacts are provided by Asp-803 and Asp-807. A helical membrane pass occupies residues 859–878 (SKFLQFQLTVNVVAVIVAFT). Residues 879–888 (GACITQDSPL) are Extracellular-facing. The helical transmembrane segment at 889-909 (KAVQMLWVNLIMDTFASLALA) threads the bilayer. Residues 910-929 (TEPPTESLLKRKPYGRNKPL) are Cytoplasmic-facing. A helical membrane pass occupies residues 930–952 (ISSTMTKNILGHGVYQLIIIFTL). The Extracellular segment spans residues 953 to 970 (LFVGEQIFDIDSGRNAPL). The helical transmembrane segment at 971 to 992 (HSPPSEHYTIIFNTFVMMQLFN) threads the bilayer. The Cytoplasmic segment spans residues 993–1011 (EINARKIHGERNVFDGIFR). Residues 1012–1033 (NPIFCSIVFGTFAVQIVIVQFG) traverse the membrane as a helical segment. Residues 1034 to 1043 (GKPFSCQPLD) lie on the Extracellular side of the membrane. Residues 1044–1065 (LEKWMWCVFLGLGELVWGQVIA) traverse the membrane as a helical segment. Topologically, residues 1066 to 1112 (TIPNSRLRFLRRAGQLTQKDELPEEDVNEENEEIDHAERELRRGQIL) are cytoplasmic. The interval 1086-1112 (ELPEEDVNEENEEIDHAERELRRGQIL) is disordered. A compositionally biased stretch (acidic residues) spans 1087–1098 (LPEEDVNEENEE). Residues 1099–1112 (IDHAERELRRGQIL) are compositionally biased toward basic and acidic residues. The interval 1106–1112 (LRRGQIL) is calmodulin-binding subdomain A.

It belongs to the cation transport ATPase (P-type) (TC 3.A.3) family. Type IIB subfamily.

It is found in the cell membrane. The catalysed reaction is Ca(2+)(in) + ATP + H2O = Ca(2+)(out) + ADP + phosphate + H(+). Functionally, this magnesium-dependent enzyme catalyzes the hydrolysis of ATP coupled with the transport of calcium out of the cell. The protein is Plasma membrane calcium-transporting ATPase 2 (atp2b2) of Oreochromis mossambicus (Mozambique tilapia).